The following is a 347-amino-acid chain: MQDLVIRRPDDWHLHLRDGGMLRGVIADTSRHFARAIIMPNLVPPVVTSADAAAYRERILAAIPAGDRFEPLMTLYLTEGTDPGDVEAGFRSGLVKAVKLYPAGATTNSSSGVRDIDKAMPVLERMAEIGLPLCVHGEVTTAEVDIFDREAVFIETVLDPLRRRLPDLRITMEHVTTKDGVDYIREHAANLAGSITTHHLIINRNAILVGGIKPHYYCLPVAKREAHRLALRQAAISGDVRFFLGTDSAPHVDPLKECACGCAGIYTSINTLSCLAHVFEEEGALDRLEAFTSLNGPAWYGLPANEETITLRKQEEPVSYPARIETEAGPVTVFDPMFPLHWAVTQA.

Positions 13 and 15 each coordinate Zn(2+). Substrate contacts are provided by residues 15–17 (HLR) and asparagine 41. Residues lysine 99, histidine 136, and histidine 174 each coordinate Zn(2+). Lysine 99 carries the N6-carboxylysine modification. Substrate is bound at residue histidine 136. Leucine 219 serves as a coordination point for substrate. Residue aspartate 247 coordinates Zn(2+). Aspartate 247 is an active-site residue. Residues histidine 251 and alanine 263 each coordinate substrate.

This sequence belongs to the metallo-dependent hydrolases superfamily. DHOase family. Class II DHOase subfamily. Homodimer. Requires Zn(2+) as cofactor.

The catalysed reaction is (S)-dihydroorotate + H2O = N-carbamoyl-L-aspartate + H(+). It functions in the pathway pyrimidine metabolism; UMP biosynthesis via de novo pathway; (S)-dihydroorotate from bicarbonate: step 3/3. Its function is as follows. Catalyzes the reversible cyclization of carbamoyl aspartate to dihydroorotate. The protein is Dihydroorotase of Rhizobium meliloti (strain 1021) (Ensifer meliloti).